The chain runs to 211 residues: Redox-sensing transcriptional repressor Rex (211 aa).

Positions 17 to 56 (LYYRLVSILKGKGIDRVNSKTISEALQIDSATIRRDFSYF) form a DNA-binding region, H-T-H motif. 91 to 96 (GIGNLG) contacts NAD(+).

It belongs to the transcriptional regulatory Rex family. As to quaternary structure, homodimer.

It is found in the cytoplasm. Modulates transcription in response to changes in cellular NADH/NAD(+) redox state. The sequence is that of Redox-sensing transcriptional repressor Rex from Staphylococcus epidermidis (strain ATCC 12228 / FDA PCI 1200).